Consider the following 149-residue polypeptide: SsrA-binding protein (149 aa).

Residues 121 to 149 (GKGEHDKRDTIKDREGKREVERAMKSRSR) form a disordered region.

It belongs to the SmpB family.

The protein resides in the cytoplasm. In terms of biological role, required for rescue of stalled ribosomes mediated by trans-translation. Binds to transfer-messenger RNA (tmRNA), required for stable association of tmRNA with ribosomes. tmRNA and SmpB together mimic tRNA shape, replacing the anticodon stem-loop with SmpB. tmRNA is encoded by the ssrA gene; the 2 termini fold to resemble tRNA(Ala) and it encodes a 'tag peptide', a short internal open reading frame. During trans-translation Ala-aminoacylated tmRNA acts like a tRNA, entering the A-site of stalled ribosomes, displacing the stalled mRNA. The ribosome then switches to translate the ORF on the tmRNA; the nascent peptide is terminated with the 'tag peptide' encoded by the tmRNA and targeted for degradation. The ribosome is freed to recommence translation, which seems to be the essential function of trans-translation. The protein is SsrA-binding protein of Polaromonas sp. (strain JS666 / ATCC BAA-500).